Here is a 184-residue protein sequence, read N- to C-terminus: Cytidylate kinase (184 aa).

8-16 (GQPGSGKTT) is an ATP binding site.

The protein belongs to the cytidylate kinase family. Type 2 subfamily.

The protein localises to the cytoplasm. It catalyses the reaction CMP + ATP = CDP + ADP. The enzyme catalyses dCMP + ATP = dCDP + ADP. The chain is Cytidylate kinase from Pyrobaculum calidifontis (strain DSM 21063 / JCM 11548 / VA1).